The following is a 368-amino-acid chain: tRNA 2-selenouridine synthase (368 aa).

Positions 12 to 136 constitute a Rhodanese domain; it reads FLGDAPLLDT…MRGFLLETIE (125 aa). Catalysis depends on cysteine 95, which acts as the S-selanylcysteine intermediate.

Belongs to the SelU family. Monomer.

It carries out the reaction 5-methylaminomethyl-2-thiouridine(34) in tRNA + selenophosphate + (2E)-geranyl diphosphate + H2O + H(+) = 5-methylaminomethyl-2-selenouridine(34) in tRNA + (2E)-thiogeraniol + phosphate + diphosphate. The catalysed reaction is 5-methylaminomethyl-2-thiouridine(34) in tRNA + (2E)-geranyl diphosphate = 5-methylaminomethyl-S-(2E)-geranyl-thiouridine(34) in tRNA + diphosphate. The enzyme catalyses 5-methylaminomethyl-S-(2E)-geranyl-thiouridine(34) in tRNA + selenophosphate + H(+) = 5-methylaminomethyl-2-(Se-phospho)selenouridine(34) in tRNA + (2E)-thiogeraniol. It catalyses the reaction 5-methylaminomethyl-2-(Se-phospho)selenouridine(34) in tRNA + H2O = 5-methylaminomethyl-2-selenouridine(34) in tRNA + phosphate. In terms of biological role, involved in the post-transcriptional modification of the uridine at the wobble position (U34) of tRNA(Lys), tRNA(Glu) and tRNA(Gln). Catalyzes the conversion of 2-thiouridine (S2U-RNA) to 2-selenouridine (Se2U-RNA). Acts in a two-step process involving geranylation of 2-thiouridine (S2U) to S-geranyl-2-thiouridine (geS2U) and subsequent selenation of the latter derivative to 2-selenouridine (Se2U) in the tRNA chain. This Bordetella bronchiseptica (strain ATCC BAA-588 / NCTC 13252 / RB50) (Alcaligenes bronchisepticus) protein is tRNA 2-selenouridine synthase.